An 87-amino-acid chain; its full sequence is U14-lycotoxin-Ls1a (87 aa).

The N-terminal stretch at 1-20 (MNSKVFAVLLLLALSTCVLS) is a signal peptide. The WAP domain maps to 21-66 (EKYCPTPRNTSCKKMNIRNNCCRDSDCTSNAFCCAEPCGNFCHKAS). Disulfide bonds link Cys24-Cys54, Cys32-Cys58, Cys41-Cys53, Cys42-Cys80, and Cys47-Cys62.

The protein belongs to the venom protein 11 family. 01 (wap-1) subfamily. In terms of processing, contains 5 disulfide bonds. Expressed by the venom gland.

The protein resides in the secreted. Has antibacterial activity. This chain is U14-lycotoxin-Ls1a, found in Lycosa singoriensis (Wolf spider).